The chain runs to 121 residues: Large ribosomal subunit protein uL14 (121 aa).

This sequence belongs to the universal ribosomal protein uL14 family. Part of the 50S ribosomal subunit. Forms a cluster with proteins L3 and L19. In the 70S ribosome, L14 and L19 interact and together make contacts with the 16S rRNA in bridges B5 and B8.

Functionally, binds to 23S rRNA. Forms part of two intersubunit bridges in the 70S ribosome. This is Large ribosomal subunit protein uL14 from Prochlorococcus marinus (strain MIT 9313).